We begin with the raw amino-acid sequence, 368 residues long: Flagellar P-ring protein (368 aa).

The N-terminal stretch at 1-22 is a signal peptide; the sequence is MLIPLARAVLALALLGAGAAHA.

Belongs to the FlgI family. As to quaternary structure, the basal body constitutes a major portion of the flagellar organelle and consists of four rings (L,P,S, and M) mounted on a central rod.

Its subcellular location is the periplasm. It localises to the bacterial flagellum basal body. Assembles around the rod to form the L-ring and probably protects the motor/basal body from shearing forces during rotation. The chain is Flagellar P-ring protein from Bordetella bronchiseptica (strain ATCC BAA-588 / NCTC 13252 / RB50) (Alcaligenes bronchisepticus).